Consider the following 127-residue polypeptide: Large ribosomal subunit protein bL20 (127 aa).

It belongs to the bacterial ribosomal protein bL20 family.

Functionally, binds directly to 23S ribosomal RNA and is necessary for the in vitro assembly process of the 50S ribosomal subunit. It is not involved in the protein synthesizing functions of that subunit. This is Large ribosomal subunit protein bL20 from Streptomyces griseus subsp. griseus (strain JCM 4626 / CBS 651.72 / NBRC 13350 / KCC S-0626 / ISP 5235).